The primary structure comprises 165 residues: Large ribosomal subunit protein uL11A (165 aa).

Proline 2 is subject to N,N-dimethylproline; by NTM1. Lysine 4 and lysine 11 each carry N6,N6,N6-trimethyllysine; by RKM2. Phosphoserine occurs at positions 25 and 38. An N5-methylarginine; by RMT2 modification is found at arginine 67. Residues lysine 130 and lysine 146 each participate in a glycyl lysine isopeptide (Lys-Gly) (interchain with G-Cter in ubiquitin) cross-link.

Belongs to the universal ribosomal protein uL11 family. In terms of assembly, component of the large ribosomal subunit (LSU). Mature yeast ribosomes consist of a small (40S) and a large (60S) subunit. The 40S small subunit contains 1 molecule of ribosomal RNA (18S rRNA) and 33 different proteins (encoded by 57 genes). The large 60S subunit contains 3 rRNA molecules (25S, 5.8S and 5S rRNA) and 46 different proteins (encoded by 81 genes). It appears that the main modified species for L12 contains 6 methyl groups, 2 on Pro-2, 3 on Lys-4 and 1 on Arg-67. Although not reproduced with a second method, methylation at Lys-11 cannot be ruled out.

The protein localises to the cytoplasm. Its function is as follows. Component of the ribosome, a large ribonucleoprotein complex responsible for the synthesis of proteins in the cell. The small ribosomal subunit (SSU) binds messenger RNAs (mRNAs) and translates the encoded message by selecting cognate aminoacyl-transfer RNA (tRNA) molecules. The large subunit (LSU) contains the ribosomal catalytic site termed the peptidyl transferase center (PTC), which catalyzes the formation of peptide bonds, thereby polymerizing the amino acids delivered by tRNAs into a polypeptide chain. The nascent polypeptides leave the ribosome through a tunnel in the LSU and interact with protein factors that function in enzymatic processing, targeting, and the membrane insertion of nascent chains at the exit of the ribosomal tunnel. The sequence is that of Large ribosomal subunit protein uL11A from Saccharomyces cerevisiae (strain ATCC 204508 / S288c) (Baker's yeast).